Here is a 337-residue protein sequence, read N- to C-terminus: Phosphate acyltransferase (337 aa).

Belongs to the PlsX family. Homodimer. Probably interacts with PlsY.

The protein resides in the cytoplasm. It carries out the reaction a fatty acyl-[ACP] + phosphate = an acyl phosphate + holo-[ACP]. It participates in lipid metabolism; phospholipid metabolism. Catalyzes the reversible formation of acyl-phosphate (acyl-PO(4)) from acyl-[acyl-carrier-protein] (acyl-ACP). This enzyme utilizes acyl-ACP as fatty acyl donor, but not acyl-CoA. The sequence is that of Phosphate acyltransferase from Listeria innocua serovar 6a (strain ATCC BAA-680 / CLIP 11262).